The chain runs to 147 residues: Transthyretin (147 aa).

Positions 1–20 are cleaved as a signal peptide; the sequence is MASFRLLLLCLAGLVFVSEA. At Cys-30 the chain carries Sulfocysteine. Lys-35 provides a ligand contact to L-thyroxine. Glu-62 bears the 4-carboxyglutamate mark. Ser-72 bears the Phosphoserine mark. An L-thyroxine-binding site is contributed by Glu-74. An N-linked (GlcNAc...) asparagine glycan is attached at Asn-118. Residue Ser-137 participates in L-thyroxine binding.

It belongs to the transthyretin family. As to quaternary structure, homotetramer. Dimer of dimers. In the homotetramer, subunits assemble around a central channel that can accommodate two ligand molecules. Interacts with RBP4. In terms of processing, sulfonation of the reactive cysteine Cys-30 enhances the stability of the native conformation of TTR, avoiding misassembly of the protein leading to amyloid formation. As to expression, highly expressed in the choroid plexus.

It localises to the secreted. Thyroid hormone-binding protein. Probably transports thyroxine from the bloodstream to the brain. This chain is Transthyretin (TTR), found in Ovis aries (Sheep).